Consider the following 961-residue polypeptide: Mitogen-activated protein kinase kinase kinase 13-A (961 aa).

Positions 88 to 118 (LRDQDEPENTAPQGSSHSGDGGSYSGNEDIR) are disordered. Residues 169 to 410 (ISELQWLGSG…FRQILMHLDI (242 aa)) form the Protein kinase domain. Residues 175 to 183 (LGSGAQGAV) and Lys-196 each bind ATP. Catalysis depends on Asp-280, which acts as the Proton acceptor. Leucine-zipper regions lie at residues 434-455 (VKKHFEKIKSEGTCIHRLDEEL) and 487-508 (LSAIMLQLEVREKELIRREQAV). The stretch at 458-497 (RRREELRHALDIREHYERKLERANNLYMELSAIMLQLEVR) forms a coiled coil. Disordered regions lie at residues 513-600 (PGTY…SKGS), 615-637 (ALSQQSSQHQTLASPPVTSCSPY), and 799-883 (RRIR…KLDD). Over residues 560-578 (SAEGSAASASPISGSPKTS) the composition is skewed to low complexity. A compositionally biased stretch (basic residues) spans 584–596 (NRYRSKPRHRRVN). Over residues 810–823 (ESSEEEEGEVDSEV) the composition is skewed to acidic residues. Residues 811-824 (SSEEEEGEVDSEVE) are acidic. Positions 837–851 (KCQSYSTFSSENFSV) are enriched in polar residues.

It belongs to the protein kinase superfamily. Ser/Thr protein kinase family.

Its subcellular location is the cytoplasm. It localises to the membrane. It carries out the reaction L-seryl-[protein] + ATP = O-phospho-L-seryl-[protein] + ADP + H(+). The enzyme catalyses L-threonyl-[protein] + ATP = O-phospho-L-threonyl-[protein] + ADP + H(+). May have a role in the JNK signaling pathway. The protein is Mitogen-activated protein kinase kinase kinase 13-A (map3k13-a) of Xenopus laevis (African clawed frog).